A 64-amino-acid chain; its full sequence is uncharacterized protein (64 aa).

Its subcellular location is the mitochondrion. This is an uncharacterized protein from Marchantia polymorpha (Common liverwort).